We begin with the raw amino-acid sequence, 568 residues long: Sphingosine-1-phosphate lyase 1 (568 aa).

The Lumenal segment spans residues 1-41 (MPSTDLLTLKAFEPYLEILEVYSTKAKNYVNGHCTKYEPWQ). A helical; Signal-anchor for type III membrane protein membrane pass occupies residues 42-62 (LIAWSVVWTLLIVWGYEFVFQ). Over 63–568 (PESLWSRFKK…SQMNGSPKPH (506 aa)) the chain is Cytoplasmic. Lys-353 carries the post-translational modification N6-(pyridoxal phosphate)lysine; alternate. An N6-acetyllysine; alternate modification is found at Lys-353. 2 positions are modified to 3'-nitrotyrosine: Tyr-356 and Tyr-366. Ser-564 bears the Phosphoserine mark.

The protein belongs to the group II decarboxylase family. Sphingosine-1-phosphate lyase subfamily. In terms of assembly, homodimer. It depends on pyridoxal 5'-phosphate as a cofactor.

Its subcellular location is the endoplasmic reticulum membrane. It carries out the reaction sphinganine 1-phosphate = hexadecanal + phosphoethanolamine. The catalysed reaction is sphing-4-enine 1-phosphate = (2E)-hexadecenal + phosphoethanolamine. It participates in lipid metabolism; sphingolipid metabolism. Its function is as follows. Cleaves phosphorylated sphingoid bases (PSBs), such as sphingosine-1-phosphate, into fatty aldehydes and phosphoethanolamine. Elevates stress-induced ceramide production and apoptosis. Required for global lipid homeostasis in liver and cholesterol homeostasis in fibroblasts. Involved in the regulation of pro-inflammatory response and neutrophil trafficking. Modulates neuronal autophagy via phosphoethanolamine production which regulates accumulation of aggregate-prone proteins such as APP. Seems to play a role in establishing neuronal contact sites and axonal maintenance. This is Sphingosine-1-phosphate lyase 1 from Pongo abelii (Sumatran orangutan).